Consider the following 343-residue polypeptide: Protein RecA (343 aa).

Residue 65 to 72 participates in ATP binding; sequence GPESSGKT.

It belongs to the RecA family.

The protein localises to the cytoplasm. In terms of biological role, can catalyze the hydrolysis of ATP in the presence of single-stranded DNA, the ATP-dependent uptake of single-stranded DNA by duplex DNA, and the ATP-dependent hybridization of homologous single-stranded DNAs. It interacts with LexA causing its activation and leading to its autocatalytic cleavage. The chain is Protein RecA from Campylobacter jejuni subsp. doylei (strain ATCC BAA-1458 / RM4099 / 269.97).